A 153-amino-acid polypeptide reads, in one-letter code: Endoribonuclease YbeY (153 aa).

His-114, His-118, and His-124 together coordinate Zn(2+).

It belongs to the endoribonuclease YbeY family. Zn(2+) is required as a cofactor.

The protein resides in the cytoplasm. Functionally, single strand-specific metallo-endoribonuclease involved in late-stage 70S ribosome quality control and in maturation of the 3' terminus of the 16S rRNA. The protein is Endoribonuclease YbeY of Shewanella baltica (strain OS155 / ATCC BAA-1091).